Reading from the N-terminus, the 477-residue chain is Putative 4-(hydroxymethyl)benzenesulfonate dehydrogenase TsaD2 (477 aa).

NAD(+) contacts are provided by residues 154-155, 178-181, and 230-231; these read WN, KAAE, and GS. The Proton acceptor role is filled by glutamate 252. NAD(+) is bound at residue leucine 253. The Nucleophile role is filled by cysteine 286. Glutamate 381 serves as a coordination point for NAD(+).

It belongs to the aldehyde dehydrogenase family. As to quaternary structure, homodimer.

It catalyses the reaction 4-(hydroxymethyl)benzenesulfonate + NAD(+) = 4-formylbenzenesulfonate + NADH + H(+). Involved in the toluene-4-sulfonate degradation pathway. Does not discriminate between the sulfonate and the carboxyl substituents and can also be involved in the p-toluenecarboxylate degradation pathway. The polypeptide is Putative 4-(hydroxymethyl)benzenesulfonate dehydrogenase TsaD2 (tsaD2) (Comamonas testosteroni (Pseudomonas testosteroni)).